The chain runs to 185 residues: CASP-like protein 2C3 (185 aa).

Over 1-13 (MAAAARVSEVKAE) the chain is Cytoplasmic. A helical transmembrane segment spans residues 14–34 (GLLRGACAALAAAAALLVGLS). At 35 to 53 (TQTETVLLVRKKATVKDVQ) the chain is on the extracellular side. A helical membrane pass occupies residues 54–74 (ALWVLAMAAAAAAGYHLLQLL). The Cytoplasmic portion of the chain corresponds to 75–104 (KCLYLGRVGGARPCRRSSRALAWTCLLLDK). A helical membrane pass occupies residues 105-125 (ACAYTTFATTVAAAQACVVAL). The Extracellular segment spans residues 126 to 146 (DGAHAVQWTKLCNIYTRFCEQ). A helical membrane pass occupies residues 147–167 (VAGSLVLGMLAAVGTAVLSAA). Over 168–185 (SARNVFRHYSSLETYAAH) the chain is Cytoplasmic.

It belongs to the Casparian strip membrane proteins (CASP) family. Homodimer and heterodimers.

The protein resides in the cell membrane. This is CASP-like protein 2C3 from Zea mays (Maize).